Reading from the N-terminus, the 176-residue chain is Shikimate kinase (176 aa).

14–19 serves as a coordination point for ATP; sequence GAGKST. Position 18 (serine 18) interacts with Mg(2+). Residues aspartate 36, arginine 60, and glycine 83 each coordinate substrate. Residue arginine 121 coordinates ATP. A substrate-binding site is contributed by arginine 140.

It belongs to the shikimate kinase family. Monomer. Requires Mg(2+) as cofactor.

Its subcellular location is the cytoplasm. The catalysed reaction is shikimate + ATP = 3-phosphoshikimate + ADP + H(+). It participates in metabolic intermediate biosynthesis; chorismate biosynthesis; chorismate from D-erythrose 4-phosphate and phosphoenolpyruvate: step 5/7. Functionally, catalyzes the specific phosphorylation of the 3-hydroxyl group of shikimic acid using ATP as a cosubstrate. The polypeptide is Shikimate kinase (Francisella tularensis subsp. tularensis (strain FSC 198)).